The primary structure comprises 105 residues: UPF0235 protein A1C_06510 (105 aa).

Belongs to the UPF0235 family.

The protein is UPF0235 protein A1C_06510 of Rickettsia akari (strain Hartford).